Reading from the N-terminus, the 62-residue chain is Conotoxin TsMLCL-02 (62 aa).

Positions 1-19 (MLCLPVFIILLLLASPAAP) are cleaved as a signal peptide. Residues 20–54 (NPLERRIQSDLIRAALEDADMKTEKGILSSIMGTL) constitute a propeptide that is removed on maturation.

Belongs to the conotoxin T superfamily. Expressed by the venom duct.

It localises to the secreted. The protein is Conotoxin TsMLCL-02 of Conus tessulatus (Tessellate cone).